Here is a 566-residue protein sequence, read N- to C-terminus: CTP synthase (566 aa).

Residues 1 to 270 (MTKFVFVTGG…DGLICDKLRL (270 aa)) are amidoligase domain. S13 provides a ligand contact to CTP. UTP is bound at residue S13. ATP is bound by residues 14–19 (SLGKGI) and D71. The Mg(2+) site is built by D71 and E144. Residues 151–153 (DIE), 191–196 (KTKPTQ), and K227 contribute to the CTP site. UTP contacts are provided by residues 191 to 196 (KTKPTQ) and K227. One can recognise a Glutamine amidotransferase type-1 domain in the interval 295 to 547 (SIAMVGKYVD…IAATLEQRSA (253 aa)). Residue G356 participates in L-glutamine binding. C383 serves as the catalytic Nucleophile; for glutamine hydrolysis. L-glutamine contacts are provided by residues 384–387 (LGMQ), E407, and R473. Active-site residues include H520 and E522.

It belongs to the CTP synthase family. Homotetramer.

It carries out the reaction UTP + L-glutamine + ATP + H2O = CTP + L-glutamate + ADP + phosphate + 2 H(+). The catalysed reaction is L-glutamine + H2O = L-glutamate + NH4(+). The enzyme catalyses UTP + NH4(+) + ATP = CTP + ADP + phosphate + 2 H(+). Its pathway is pyrimidine metabolism; CTP biosynthesis via de novo pathway; CTP from UDP: step 2/2. With respect to regulation, allosterically activated by GTP, when glutamine is the substrate; GTP has no effect on the reaction when ammonia is the substrate. The allosteric effector GTP functions by stabilizing the protein conformation that binds the tetrahedral intermediate(s) formed during glutamine hydrolysis. Inhibited by the product CTP, via allosteric rather than competitive inhibition. In terms of biological role, catalyzes the ATP-dependent amination of UTP to CTP with either L-glutamine or ammonia as the source of nitrogen. Regulates intracellular CTP levels through interactions with the four ribonucleotide triphosphates. In Polaromonas naphthalenivorans (strain CJ2), this protein is CTP synthase.